Here is a 253-residue protein sequence, read N- to C-terminus: 3-dehydroquinate dehydratase (253 aa).

Residues 46–48 (EWR) and R82 contribute to the 3-dehydroquinate site. H143 serves as the catalytic Proton donor/acceptor. Residue K170 is the Schiff-base intermediate with substrate of the active site. 3-dehydroquinate contacts are provided by R213, S232, and Q236.

It belongs to the type-I 3-dehydroquinase family. As to quaternary structure, homodimer.

The enzyme catalyses 3-dehydroquinate = 3-dehydroshikimate + H2O. Its pathway is metabolic intermediate biosynthesis; chorismate biosynthesis; chorismate from D-erythrose 4-phosphate and phosphoenolpyruvate: step 3/7. In terms of biological role, involved in the third step of the chorismate pathway, which leads to the biosynthesis of aromatic amino acids. Catalyzes the cis-dehydration of 3-dehydroquinate (DHQ) and introduces the first double bond of the aromatic ring to yield 3-dehydroshikimate. The polypeptide is 3-dehydroquinate dehydratase (Bacillus velezensis (strain DSM 23117 / BGSC 10A6 / LMG 26770 / FZB42) (Bacillus amyloliquefaciens subsp. plantarum)).